Consider the following 506-residue polypeptide: Histidine ammonia-lyase (506 aa).

A cross-link (5-imidazolinone (Ala-Gly)) is located at residues Ala-143–Gly-145. Ser-144 carries the 2,3-didehydroalanine (Ser) modification.

This sequence belongs to the PAL/histidase family. Contains an active site 4-methylidene-imidazol-5-one (MIO), which is formed autocatalytically by cyclization and dehydration of residues Ala-Ser-Gly.

It localises to the cytoplasm. The enzyme catalyses L-histidine = trans-urocanate + NH4(+). The protein operates within amino-acid degradation; L-histidine degradation into L-glutamate; N-formimidoyl-L-glutamate from L-histidine: step 1/3. This chain is Histidine ammonia-lyase, found in Salmonella paratyphi B (strain ATCC BAA-1250 / SPB7).